The sequence spans 123 residues: Large ribosomal subunit protein bL17 (123 aa).

Belongs to the bacterial ribosomal protein bL17 family. As to quaternary structure, part of the 50S ribosomal subunit. Contacts protein L32.

This Borreliella afzelii (strain PKo) (Borrelia afzelii) protein is Large ribosomal subunit protein bL17.